The primary structure comprises 99 residues: Acylphosphatase (99 aa).

Residues 5 to 97 form the Acylphosphatase-like domain; sequence VRQIVIRGRV…RPGERFSQLP (93 aa). Residues Arg20 and Asn38 contribute to the active site.

The protein belongs to the acylphosphatase family.

It carries out the reaction an acyl phosphate + H2O = a carboxylate + phosphate + H(+). This is Acylphosphatase (acyP) from Nitrobacter hamburgensis (strain DSM 10229 / NCIMB 13809 / X14).